We begin with the raw amino-acid sequence, 273 residues long: Ribosomal RNA small subunit methyltransferase A (273 aa).

Asparagine 19, leucine 21, glycine 46, glutamate 67, aspartate 92, and asparagine 113 together coordinate S-adenosyl-L-methionine.

This sequence belongs to the class I-like SAM-binding methyltransferase superfamily. rRNA adenine N(6)-methyltransferase family. RsmA subfamily.

The protein localises to the cytoplasm. The catalysed reaction is adenosine(1518)/adenosine(1519) in 16S rRNA + 4 S-adenosyl-L-methionine = N(6)-dimethyladenosine(1518)/N(6)-dimethyladenosine(1519) in 16S rRNA + 4 S-adenosyl-L-homocysteine + 4 H(+). In terms of biological role, specifically dimethylates two adjacent adenosines (A1518 and A1519) in the loop of a conserved hairpin near the 3'-end of 16S rRNA in the 30S particle. May play a critical role in biogenesis of 30S subunits. This is Ribosomal RNA small subunit methyltransferase A from Hahella chejuensis (strain KCTC 2396).